The primary structure comprises 188 residues: MHYTATVLLAFGMSMDAFAASIGKGATLHKPKFSEALRTGLIFGAVETLTPLIGWGLGILASKFVLEWNHWIAFVLLIFLGGRMIIEGIRGGSDEDETPLRRHSFWLLVTTAIATSLDAMAVGVGLAFLQVNIIATALAIGCATLIMSTLGMMIGRFIGPMLGKRAEILGGVVLIGIGVQILWTHFHG.

The next 6 helical transmembrane spans lie at 3 to 23 (YTATVLLAFGMSMDAFAASIG), 41 to 61 (LIFGAVETLTPLIGWGLGILA), 66 to 86 (LEWNHWIAFVLLIFLGGRMII), 106 to 128 (WLLVTTAIATSLDAMAVGVGLAF), 143 to 163 (ATLIMSTLGMMIGRFIGPMLG), and 168 to 188 (ILGGVVLIGIGVQILWTHFHG).

The protein belongs to the MntP (TC 9.B.29) family.

It is found in the cell inner membrane. Its function is as follows. Probably functions as a manganese efflux pump. The polypeptide is Probable manganese efflux pump MntP (Salmonella heidelberg (strain SL476)).